The chain runs to 694 residues: Proprotein convertase subtilisin/kexin type 9 (694 aa).

Residues 1 to 34 (MGTHCSAWLRWPLLPLLPPLLLLLLLLCPTGAGA) form the signal peptide. A propeptide spanning residues 35-155 (QDEDGDYEEL…IEEDSFVFAQ (121 aa)) is cleaved from the precursor. Sulfotyrosine is present on Tyr-41. Ser-50 is subject to Phosphoserine. The region spanning 158–470 (PWNLERIIPA…RTVWSAHSGP (313 aa)) is the Peptidase S8 domain. Catalysis depends on charge relay system residues Asp-189 and His-229. 2 cysteine pairs are disulfide-bonded: Cys-226-Cys-258 and Cys-326-Cys-361. Ser-389 acts as the Charge relay system in catalysis. A C-terminal domain region spans residues 453 to 694 (ETGGQLLCRT…RPSAKASWVQ (242 aa)). Intrachain disulfides connect Cys-460–Cys-530, Cys-480–Cys-529, and Cys-489–Cys-512. Residues 499–501 (RGD) carry the Cell attachment site motif. Residue Asn-536 is glycosylated (N-linked (GlcNAc...) asparagine). 6 cysteine pairs are disulfide-bonded: Cys-537–Cys-604, Cys-555–Cys-603, Cys-565–Cys-591, Cys-611–Cys-682, Cys-629–Cys-681, and Cys-638–Cys-657. Residue Ser-691 is modified to Phosphoserine.

It belongs to the peptidase S8 family. As to quaternary structure, monomer. Can self-associate to form dimers and higher multimers which may have increased LDLR degrading activity. The precursor protein but not the mature protein may form multimers. Interacts with APOB, VLDLR, LRP8/APOER2 and BACE1. The full-length immature form (pro-PCSK9) interacts with SCNN1A, SCNN1B and SCNN1G. The pro-PCSK9 form (via C-terminal domain) interacts with LDLR. Interacts (via the C-terminal domain) with ANXA2 (via repeat Annexin 1); the interaction inhibits the degradation of LDLR. It depends on Ca(2+) as a cofactor. Post-translationally, cleavage by furin and PCSK5 generates a truncated inactive protein that is unable to induce LDLR degradation. Undergoes autocatalytic cleavage in the endoplasmic reticulum to release the propeptide from the N-terminus and the cleavage of the propeptide is strictly required for its maturation and activation. The cleaved propeptide however remains associated with the catalytic domain through non-covalent interactions, preventing potential substrates from accessing its active site. As a result, it is secreted from cells as a propeptide-containing, enzymatically inactive protein. In terms of processing, phosphorylation protects the propeptide against proteolysis. As to expression, hepatocytes, kidney mesenchymal cells, intestinal ileum, colon epithelia and embryonic brain telencephalon neurons.

It is found in the cytoplasm. The protein localises to the secreted. It localises to the endosome. The protein resides in the lysosome. Its subcellular location is the cell surface. It is found in the endoplasmic reticulum. The protein localises to the golgi apparatus. Its proteolytic activity is autoinhibited by the non-covalent binding of the propeptide to the catalytic domain. Inhibited by EGTA. Crucial player in the regulation of plasma cholesterol homeostasis. Binds to low-density lipid receptor family members: low density lipoprotein receptor (LDLR), very low density lipoprotein receptor (VLDLR), apolipoprotein E receptor (LRP1/APOER) and apolipoprotein receptor 2 (LRP8/APOER2), and promotes their degradation in intracellular acidic compartments. Acts via a non-proteolytic mechanism to enhance the degradation of the hepatic LDLR through a clathrin LDLRAP1/ARH-mediated pathway. May prevent the recycling of LDLR from endosomes to the cell surface or direct it to lysosomes for degradation. Can induce ubiquitination of LDLR leading to its subsequent degradation. Inhibits intracellular degradation of APOB via the autophagosome/lysosome pathway in a LDLR-independent manner. Involved in the disposal of non-acetylated intermediates of BACE1 in the early secretory pathway. Inhibits epithelial Na(+) channel (ENaC)-mediated Na(+) absorption by reducing ENaC surface expression primarily by increasing its proteasomal degradation. Regulates neuronal apoptosis via modulation of LRP8/APOER2 levels and related anti-apoptotic signaling pathways. The chain is Proprotein convertase subtilisin/kexin type 9 (Pcsk9) from Mus musculus (Mouse).